Consider the following 285-residue polypeptide: GPN-loop GTPase 3 (285 aa).

GTP is bound at residue 13–18 (GSGKST). The Gly-Pro-Asn (GPN)-loop; involved in dimer interface signature appears at 72–74 (GPN). Residue 174-177 (TKMD) participates in GTP binding. A disordered region spans residues 262-285 (EPKEVDEEPSNSNFDAFFQDTADS).

This sequence belongs to the GPN-loop GTPase family. Heterodimer with gpn1. Binds to RNA polymerase II (RNAPII).

Small GTPase required for proper localization of RNA polymerase II (RNAPII). May act at an RNAP assembly step prior to nuclear import. The polypeptide is GPN-loop GTPase 3 (Danio rerio (Zebrafish)).